The chain runs to 122 residues: Large ribosomal subunit protein uL14 (122 aa).

It belongs to the universal ribosomal protein uL14 family. As to quaternary structure, part of the 50S ribosomal subunit. Forms a cluster with proteins L3 and L19. In the 70S ribosome, L14 and L19 interact and together make contacts with the 16S rRNA in bridges B5 and B8.

Binds to 23S rRNA. Forms part of two intersubunit bridges in the 70S ribosome. The protein is Large ribosomal subunit protein uL14 of Paracoccus denitrificans (strain Pd 1222).